The following is a 427-amino-acid chain: 3-phosphoshikimate 1-carboxyvinyltransferase (427 aa).

K22, S23, and R27 together coordinate 3-phosphoshikimate. Residue K22 participates in phosphoenolpyruvate binding. Phosphoenolpyruvate-binding residues include G96 and R124. 3-phosphoshikimate is bound by residues S169, S170, Q171, S197, D313, N336, and K340. Residue Q171 coordinates phosphoenolpyruvate. The active-site Proton acceptor is D313. R344, R386, and K411 together coordinate phosphoenolpyruvate.

Belongs to the EPSP synthase family. Monomer.

The protein localises to the cytoplasm. It carries out the reaction 3-phosphoshikimate + phosphoenolpyruvate = 5-O-(1-carboxyvinyl)-3-phosphoshikimate + phosphate. The protein operates within metabolic intermediate biosynthesis; chorismate biosynthesis; chorismate from D-erythrose 4-phosphate and phosphoenolpyruvate: step 6/7. Functionally, catalyzes the transfer of the enolpyruvyl moiety of phosphoenolpyruvate (PEP) to the 5-hydroxyl of shikimate-3-phosphate (S3P) to produce enolpyruvyl shikimate-3-phosphate and inorganic phosphate. The chain is 3-phosphoshikimate 1-carboxyvinyltransferase from Klebsiella pneumoniae (strain 342).